A 682-amino-acid chain; its full sequence is UvrABC system protein B (682 aa).

Positions 27–414 (DNIRAGVAHQ…SEGIVVEQII (388 aa)) constitute a Helicase ATP-binding domain. Residue 40–47 (GVTGSGKT) coordinates ATP. The short motif at 93-116 (YYDYYQPEAYVPTSDTYIEKDSSI) is the Beta-hairpin element. The region spanning 432 to 594 (QMEDLMTECR…IEPVSVRKSL (163 aa)) is the Helicase C-terminal domain. A disordered region spans residues 609–628 (AAKGRGKGRGRQAAPAQTAA). The 36-residue stretch at 642–677 (GGLIQRLEREMRESARDLEFEKAAELRDRIRMLRER) folds into the UVR domain.

The protein belongs to the UvrB family. In terms of assembly, forms a heterotetramer with UvrA during the search for lesions. Interacts with UvrC in an incision complex.

The protein localises to the cytoplasm. Its function is as follows. The UvrABC repair system catalyzes the recognition and processing of DNA lesions. A damage recognition complex composed of 2 UvrA and 2 UvrB subunits scans DNA for abnormalities. Upon binding of the UvrA(2)B(2) complex to a putative damaged site, the DNA wraps around one UvrB monomer. DNA wrap is dependent on ATP binding by UvrB and probably causes local melting of the DNA helix, facilitating insertion of UvrB beta-hairpin between the DNA strands. Then UvrB probes one DNA strand for the presence of a lesion. If a lesion is found the UvrA subunits dissociate and the UvrB-DNA preincision complex is formed. This complex is subsequently bound by UvrC and the second UvrB is released. If no lesion is found, the DNA wraps around the other UvrB subunit that will check the other stand for damage. In Oleidesulfovibrio alaskensis (strain ATCC BAA-1058 / DSM 17464 / G20) (Desulfovibrio alaskensis), this protein is UvrABC system protein B.